A 203-amino-acid chain; its full sequence is E3 ubiquitin-protein ligase rnf152-A (203 aa).

Residues 12-55 form an RING-type; degenerate zinc finger; the sequence is CQICFNYYSPRRRPKLLDCKRTCCSVCLQQMRACQKDLRCPWCR. A helical transmembrane segment spans residues 167-187; the sequence is SGICTVILVACVLVFLLGIVL.

The protein belongs to the RNF152 family.

The protein localises to the lysosome membrane. The enzyme catalyses S-ubiquitinyl-[E2 ubiquitin-conjugating enzyme]-L-cysteine + [acceptor protein]-L-lysine = [E2 ubiquitin-conjugating enzyme]-L-cysteine + N(6)-ubiquitinyl-[acceptor protein]-L-lysine.. The protein operates within protein modification; protein ubiquitination. E3 ubiquitin-protein ligase that acts as a negative regulator of mTORC1 signaling by mediating ubiquitination of RagA/RRAGA and RHEB. Catalyzes 'Lys-63'-linked polyubiquitination of RagA/RRAGA in response to amino acid starvation, thereby regulating mTORC1 signaling. Also mediates monoubiquitination of RHEB, promoting its association with the TSC-TBC complex and subsequent inhibition. Also mediates 'Lys-48'-linked polyubiquitination of target proteins and their subsequent targeting to the proteasome for degradation. The sequence is that of E3 ubiquitin-protein ligase rnf152-A from Xenopus laevis (African clawed frog).